An 884-amino-acid chain; its full sequence is Formin-like protein 11 (884 aa).

Positions M1–C18 are cleaved as a signal peptide. A disordered region spans residues A89–E143. Composition is skewed to pro residues over residues W97–N107 and A115–P126. The helical transmembrane segment at I158–G178 threads the bilayer. Disordered regions lie at residues S307–K384, S416–P469, and M512–L532. Residues S329–S343 are compositionally biased toward low complexity. The span at F346–R358 shows a compositional bias: basic and acidic residues. Pro residues-rich tracts occupy residues A367 to P379 and Q425 to Q436. Positions L461 to R884 constitute an FH2 domain.

This sequence belongs to the formin-like family. Class-I subfamily.

The protein localises to the membrane. Functionally, might be involved in the organization and polarity of the actin cytoskeleton. This chain is Formin-like protein 11 (FH11), found in Arabidopsis thaliana (Mouse-ear cress).